We begin with the raw amino-acid sequence, 465 residues long: Dihydrolipoyl dehydrogenase (465 aa).

FAD-binding positions include 34-42, Lys51, and Gly114; that span reads EEREAGGTC. Cys42 and Cys47 form a disulfide bridge. NAD(+)-binding positions include 180–184, Glu203, Val237, and 264–267; these read GGGVI and SIGR. Residues Asp307 and Ala315 each contribute to the FAD site. The active-site Proton acceptor is His439.

The protein belongs to the class-I pyridine nucleotide-disulfide oxidoreductase family. FAD serves as cofactor.

Its subcellular location is the cytoplasm. The enzyme catalyses N(6)-[(R)-dihydrolipoyl]-L-lysyl-[protein] + NAD(+) = N(6)-[(R)-lipoyl]-L-lysyl-[protein] + NADH + H(+). Functionally, the branched-chain alpha-keto dehydrogenase complex catalyzes the overall conversion of alpha-keto acids to acyl-CoA and CO(2). It contains multiple copies of 3 enzymatic components: branched-chain alpha-keto acid decarboxylase (E1), lipoamide acyltransferase (E2) and lipoamide dehydrogenase (E3). The chain is Dihydrolipoyl dehydrogenase (lpdA) from Chlamydia muridarum (strain MoPn / Nigg).